Here is a 96-residue protein sequence, read N- to C-terminus: Aspartyl/glutamyl-tRNA(Asn/Gln) amidotransferase subunit C (96 aa).

Belongs to the GatC family. Heterotrimer of A, B and C subunits.

The catalysed reaction is L-glutamyl-tRNA(Gln) + L-glutamine + ATP + H2O = L-glutaminyl-tRNA(Gln) + L-glutamate + ADP + phosphate + H(+). It carries out the reaction L-aspartyl-tRNA(Asn) + L-glutamine + ATP + H2O = L-asparaginyl-tRNA(Asn) + L-glutamate + ADP + phosphate + 2 H(+). Functionally, allows the formation of correctly charged Asn-tRNA(Asn) or Gln-tRNA(Gln) through the transamidation of misacylated Asp-tRNA(Asn) or Glu-tRNA(Gln) in organisms which lack either or both of asparaginyl-tRNA or glutaminyl-tRNA synthetases. The reaction takes place in the presence of glutamine and ATP through an activated phospho-Asp-tRNA(Asn) or phospho-Glu-tRNA(Gln). The chain is Aspartyl/glutamyl-tRNA(Asn/Gln) amidotransferase subunit C from Leptospira interrogans serogroup Icterohaemorrhagiae serovar copenhageni (strain Fiocruz L1-130).